The primary structure comprises 517 residues: Crotonobetaine/carnitine--CoA ligase (517 aa).

The protein belongs to the ATP-dependent AMP-binding enzyme family.

It carries out the reaction 4-(trimethylamino)butanoate + ATP + CoA = 4-(trimethylamino)butanoyl-CoA + AMP + diphosphate. The catalysed reaction is crotonobetaine + ATP + CoA = crotonobetainyl-CoA + AMP + diphosphate. The enzyme catalyses (R)-carnitine + ATP + CoA = (R)-carnitinyl-CoA + AMP + diphosphate. Its pathway is amine and polyamine metabolism; carnitine metabolism. Its function is as follows. Catalyzes the transfer of CoA to carnitine, generating the initial carnitinyl-CoA needed for the CaiB reaction cycle. Also has activity toward crotonobetaine and gamma-butyrobetaine. The polypeptide is Crotonobetaine/carnitine--CoA ligase (Shigella sonnei (strain Ss046)).